The chain runs to 808 residues: Putative minor structural protein VP5 (808 aa).

Its subcellular location is the virion. In Rice ragged stunt virus (isolate Thailand) (RRSV), this protein is Putative minor structural protein VP5.